Consider the following 250-residue polypeptide: Cell division protein ZapD (250 aa).

Belongs to the ZapD family. In terms of assembly, interacts with FtsZ.

Its subcellular location is the cytoplasm. Its function is as follows. Cell division factor that enhances FtsZ-ring assembly. Directly interacts with FtsZ and promotes bundling of FtsZ protofilaments, with a reduction in FtsZ GTPase activity. This is Cell division protein ZapD from Yersinia enterocolitica serotype O:8 / biotype 1B (strain NCTC 13174 / 8081).